The chain runs to 499 residues: WD repeat-containing protein 55 homolog (499 aa).

The interval 1-130 is disordered; sequence MHTHNNFKTP…EATFDLDVDD (130 aa). 2 stretches are compositionally biased toward acidic residues: residues 12 to 23 and 31 to 48; these read DEDELDDLDEDM and IEQE…EYDL. Low complexity predominate over residues 91-103; the sequence is DDAGGASAGGATS. The span at 113-122 shows a compositional bias: polar residues; sequence PSGSNRQSEA. WD repeat units lie at residues 154–193, 198–237, 241–279, 282–321, 324–363, and 408–447; these read KLED…NKLL, VHSK…LKKL, AHDD…AIFE, ELED…MYVQ, PYEE…YHCD, and QHNM…DFGD. The disordered stretch occupies residues 480–499; that stretch reads TKEDADDDDHDPSAGPSNMA.

Belongs to the WD repeat WDR55 family.

The polypeptide is WD repeat-containing protein 55 homolog (Drosophila yakuba (Fruit fly)).